Here is a 477-residue protein sequence, read N- to C-terminus: Ribulose bisphosphate carboxylase large chain (477 aa).

A propeptide spanning residues 1 to 2 (MS) is cleaved from the precursor. At proline 3 the chain carries N-acetylproline. The substrate site is built by asparagine 123 and threonine 173. Lysine 175 functions as the Proton acceptor in the catalytic mechanism. Lysine 177 serves as a coordination point for substrate. Mg(2+) contacts are provided by lysine 201, aspartate 203, and glutamate 204. Position 201 is an N6-carboxylysine (lysine 201). Histidine 294 serves as the catalytic Proton acceptor. Substrate-binding residues include arginine 295, histidine 327, and serine 379.

The protein belongs to the RuBisCO large chain family. Type I subfamily. Heterohexadecamer of 8 large chains and 8 small chains; disulfide-linked. The disulfide link is formed within the large subunit homodimers. The cofactor is Mg(2+). Post-translationally, the disulfide bond which can form between Cys-247 in the large chain dimeric partners within the hexadecamer appears to be associated with oxidative stress and protein turnover.

Its subcellular location is the plastid. It is found in the chloroplast. The catalysed reaction is 2 (2R)-3-phosphoglycerate + 2 H(+) = D-ribulose 1,5-bisphosphate + CO2 + H2O. It carries out the reaction D-ribulose 1,5-bisphosphate + O2 = 2-phosphoglycolate + (2R)-3-phosphoglycerate + 2 H(+). RuBisCO catalyzes two reactions: the carboxylation of D-ribulose 1,5-bisphosphate, the primary event in carbon dioxide fixation, as well as the oxidative fragmentation of the pentose substrate in the photorespiration process. Both reactions occur simultaneously and in competition at the same active site. In Triticum aestivum (Wheat), this protein is Ribulose bisphosphate carboxylase large chain (rbcL).